The sequence spans 64 residues: DNA-binding protein 7b (64 aa).

Belongs to the 7 kDa DNA-binding/endoribonuclease P2 family. In terms of assembly, monomer.

It localises to the cytoplasm. Its function is as follows. Can constrain negative DNA supercoils. May be involved in maintaining the integrity of the genome at high temperature. The protein is DNA-binding protein 7b of Saccharolobus islandicus (strain HVE10/4) (Sulfolobus islandicus).